We begin with the raw amino-acid sequence, 84 residues long: UPF0473 protein CLJ_B2791 (84 aa).

The protein belongs to the UPF0473 family.

In Clostridium botulinum (strain 657 / Type Ba4), this protein is UPF0473 protein CLJ_B2791.